A 257-amino-acid polypeptide reads, in one-letter code: MLLVVSPAKKLDFESPLATEKFSQPGLLEQSQLLIDDCIKLSPSEIASLMKLSDKLAGLNAARFGQWSTPFTQDNARQAILSFNGDVYTGLDAQSFSDEDFEFAQKNFRILSGLYGLLKPLDLMQAYRLEMGCKLGNSRGDNLYQFWGEIITDELNKTLSELDDDVLINLASTEYFKSVKKKSLNATIITPTFKDWKNGQYKIISFFAKKARGLMARYIIQNKLTSVEQIKTFDLAGYQYNEAMSKDNDWVFTRKES.

The protein belongs to the UPF0246 family.

The protein is UPF0246 protein CPS_4102 of Colwellia psychrerythraea (strain 34H / ATCC BAA-681) (Vibrio psychroerythus).